We begin with the raw amino-acid sequence, 379 residues long: Forkhead box protein E1 (379 aa).

Residues 1 to 11 are compositionally biased toward polar residues; sequence MTAESQQSPTR. Residues 1–65 form a disordered region; the sequence is MTAESQQSPT…RRRKRPLQKG (65 aa). The segment covering 54–63 has biased composition (basic residues); it reads KGRRRKRPLQ. A DNA-binding region (fork-head) is located at residues 66 to 160; that stretch reads KPPYSYIALI…DSGSFLRRRK (95 aa). A disordered region spans residues 239–265; that stretch reads HSGSEHAQPPNRSISPEVNSTSSSSCN. Residues 251 to 265 are compositionally biased toward low complexity; sequence SISPEVNSTSSSSCN.

In terms of tissue distribution, first expressed at late neural tube and early tailbud stages in the hypophyseal placode. Expression continues in the developing pituitary at late tailbud stages. As development progresses, expressed in the mesoderm of the branchial arches. At stage 38, expressed in the developing thyroid and in the pharyngeal endoderm.

Its subcellular location is the nucleus. In terms of biological role, transcription factor that binds consensus sites on a variety of gene promoters and activate their transcription. The sequence is that of Forkhead box protein E1 from Xenopus laevis (African clawed frog).